Here is a 283-residue protein sequence, read N- to C-terminus: Octanoyl-[GcvH]:protein N-octanoyltransferase (283 aa).

A BPL/LPL catalytic domain is found at 42–248 (GQSDAVVRTW…TLQSFGGELY (207 aa)). The Acyl-thioester intermediate role is filled by C147.

Belongs to the octanoyltransferase LipL family.

It carries out the reaction N(6)-octanoyl-L-lysyl-[glycine-cleavage complex H protein] + L-lysyl-[lipoyl-carrier protein] = N(6)-octanoyl-L-lysyl-[lipoyl-carrier protein] + L-lysyl-[glycine-cleavage complex H protein]. It participates in protein modification; protein lipoylation via endogenous pathway; protein N(6)-(lipoyl)lysine from octanoyl-[acyl-carrier-protein]. In terms of biological role, catalyzes the amidotransfer (transamidation) of the octanoyl moiety from octanoyl-GcvH to the lipoyl domain of the E2 subunit of lipoate-dependent enzymes. The chain is Octanoyl-[GcvH]:protein N-octanoyltransferase from Geobacillus kaustophilus (strain HTA426).